A 255-amino-acid chain; its full sequence is uncharacterized protein (255 aa).

It belongs to the methyltransferase superfamily.

This is an uncharacterized protein from Mycolicibacterium paratuberculosis (strain ATCC BAA-968 / K-10) (Mycobacterium paratuberculosis).